A 921-amino-acid chain; its full sequence is Isoleucine--tRNA ligase (921 aa).

Residues 57-67 (PYANGDIHMGH) carry the 'HIGH' region motif. Residue glutamate 552 participates in L-isoleucyl-5'-AMP binding. The 'KMSKS' region signature appears at 593-597 (KMSKS). Lysine 596 contributes to the ATP binding site. Zn(2+) contacts are provided by cysteine 888, cysteine 891, cysteine 908, and cysteine 911.

This sequence belongs to the class-I aminoacyl-tRNA synthetase family. IleS type 1 subfamily. Monomer. Zn(2+) serves as cofactor.

It localises to the cytoplasm. It catalyses the reaction tRNA(Ile) + L-isoleucine + ATP = L-isoleucyl-tRNA(Ile) + AMP + diphosphate. Functionally, catalyzes the attachment of isoleucine to tRNA(Ile). As IleRS can inadvertently accommodate and process structurally similar amino acids such as valine, to avoid such errors it has two additional distinct tRNA(Ile)-dependent editing activities. One activity is designated as 'pretransfer' editing and involves the hydrolysis of activated Val-AMP. The other activity is designated 'posttransfer' editing and involves deacylation of mischarged Val-tRNA(Ile). The protein is Isoleucine--tRNA ligase of Bacillus mycoides (strain KBAB4) (Bacillus weihenstephanensis).